A 330-amino-acid polypeptide reads, in one-letter code: uncharacterized protein (330 aa).

The protein to H.influenzae HI_0461.

This is an uncharacterized protein from Escherichia coli (strain K12).